A 473-amino-acid chain; its full sequence is Cysteine protease ATG4A (473 aa).

Residues 1–33 (MTSLPGRGVSPSSSDPLCEGNAAPSSSSSGQDL) form a disordered region. The active-site Nucleophile is C160. Catalysis depends on residues D357 and H359.

It belongs to the peptidase C54 family. In terms of assembly, interacts with ATG8.

The protein localises to the cytoplasm. The enzyme catalyses [protein]-C-terminal L-amino acid-glycyl-phosphatidylethanolamide + H2O = [protein]-C-terminal L-amino acid-glycine + a 1,2-diacyl-sn-glycero-3-phosphoethanolamine. Cysteine protease that plays a key role in autophagy by mediating both proteolytic activation and delipidation of ATG8 family proteins. The protease activity is required for proteolytic activation of ATG8 family proteins: cleaves the C-terminal amino acid of ATG8 proteins to reveal a C-terminal glycine. Exposure of the glycine at the C-terminus is essential for ATG8 proteins conjugation to phosphatidylethanolamine (PE) and insertion to membranes, which is necessary for autophagy. In addition to the protease activity, also mediates delipidation of PE-conjugated ATG8 proteins. This is Cysteine protease ATG4A (ATG4A) from Oryza sativa subsp. indica (Rice).